The following is a 101-amino-acid chain: UPF0473 protein EF_1204 (101 aa).

Belongs to the UPF0473 family.

The sequence is that of UPF0473 protein EF_1204 from Enterococcus faecalis (strain ATCC 700802 / V583).